A 465-amino-acid chain; its full sequence is Cystathionine beta-lyase (465 aa).

N6-(pyridoxal phosphate)lysine is present on Lys-213.

The protein belongs to the trans-sulfuration enzymes family. Requires pyridoxal 5'-phosphate as cofactor.

The protein resides in the cytoplasm. It localises to the nucleus. The catalysed reaction is L,L-cystathionine + H2O = L-homocysteine + pyruvate + NH4(+). It carries out the reaction an S-substituted L-cysteine + H2O = a thiol + pyruvate + NH4(+). Its pathway is amino-acid biosynthesis; L-methionine biosynthesis via de novo pathway; L-homocysteine from L-cystathionine: step 1/1. In Saccharomyces cerevisiae (strain ATCC 204508 / S288c) (Baker's yeast), this protein is Cystathionine beta-lyase (STR3).